The primary structure comprises 25 residues: Antithrombin-III (25 aa).

Belongs to the serpin family. Forms protease inhibiting heterodimer with TMPRSS7. Post-translationally, phosphorylated by FAM20C in the extracellular medium. As to expression, plasma.

It localises to the secreted. It is found in the extracellular space. Its function is as follows. Most important serine protease inhibitor in plasma that regulates the blood coagulation cascade. AT-III inhibits thrombin, matriptase-3/TMPRSS7, as well as factors IXa, Xa and XIa. Its inhibitory activity is greatly enhanced in the presence of heparin. In Mesocricetus auratus (Golden hamster), this protein is Antithrombin-III (SERPINC1).